The primary structure comprises 95 residues: MGRSKKKGPYVDRKLLEKIRKLNETGEKKVIKTWSRASMIIPEMVGHTIAVYNGMKHIPVYITENMIGHRLGEFAPTRRFGGHADKKAKKGELKK.

The disordered stretch occupies residues Pro76–Lys95. Residues Gly82 to Lys95 show a composition bias toward basic and acidic residues.

The protein belongs to the universal ribosomal protein uS19 family.

Protein S19 forms a complex with S13 that binds strongly to the 16S ribosomal RNA. The sequence is that of Small ribosomal subunit protein uS19 from Thermotoga neapolitana (strain ATCC 49049 / DSM 4359 / NBRC 107923 / NS-E).